The primary structure comprises 125 residues: Ribonuclease P protein component (125 aa).

Belongs to the RnpA family. Consists of a catalytic RNA component (M1 or rnpB) and a protein subunit.

It catalyses the reaction Endonucleolytic cleavage of RNA, removing 5'-extranucleotides from tRNA precursor.. In terms of biological role, RNaseP catalyzes the removal of the 5'-leader sequence from pre-tRNA to produce the mature 5'-terminus. It can also cleave other RNA substrates such as 4.5S RNA. The protein component plays an auxiliary but essential role in vivo by binding to the 5'-leader sequence and broadening the substrate specificity of the ribozyme. In Clostridium beijerinckii (strain ATCC 51743 / NCIMB 8052) (Clostridium acetobutylicum), this protein is Ribonuclease P protein component.